A 259-amino-acid polypeptide reads, in one-letter code: Probable dihydroorotate dehydrogenase B (NAD(+)), electron transfer subunit (259 aa).

The 89-residue stretch at 1–89 (MLPLNATIVQ…RGPFGKGFSL (89 aa)) folds into the FAD-binding FR-type domain. C211, C216, C219, and C229 together coordinate [2Fe-2S] cluster.

It belongs to the PyrK family. As to quaternary structure, heterotetramer of 2 PyrK and 2 PyrD type B subunits. The cofactor is [2Fe-2S] cluster. FAD is required as a cofactor.

The protein operates within pyrimidine metabolism; UMP biosynthesis via de novo pathway; orotate from (S)-dihydroorotate (NAD(+) route): step 1/1. Functionally, responsible for channeling the electrons from the oxidation of dihydroorotate from the FMN redox center in the PyrD type B subunit to the ultimate electron acceptor NAD(+). The chain is Probable dihydroorotate dehydrogenase B (NAD(+)), electron transfer subunit from Methanosarcina barkeri (strain Fusaro / DSM 804).